The sequence spans 107 residues: Protein phosphatase 1 regulatory subunit INH3 (107 aa).

The segment covering 1–14 has biased composition (low complexity); the sequence is MSTATRPSSSATTS. Disordered regions lie at residues 1–40 and 69–107; these read MSTA…KKKK and PFDE…KAVD. Over residues 71–80 the composition is skewed to acidic residues; it reads DEDDSEEEDD. Residues 81–94 are compositionally biased toward basic and acidic residues; the sequence is NNHHCDHNHEHSES. Residues 95-107 show a composition bias toward low complexity; that stretch reads GEASSSNDSKAVD.

As to quaternary structure, interacts with protein phosphatase 1. In terms of tissue distribution, expressed in roots, cotyledons, leaves, flowers and embryos.

Its function is as follows. Inhibitor of protein-phosphatase 1 (PP1). Binds to and inhibits PP1 activity. Required for early embryogenesis progression. The polypeptide is Protein phosphatase 1 regulatory subunit INH3 (Arabidopsis thaliana (Mouse-ear cress)).